A 125-amino-acid chain; its full sequence is L-fucose mutarotase (125 aa).

Residue His13 is the Proton donor of the active site.

The protein belongs to the RbsD / FucU family. FucU mutarotase subfamily.

The catalysed reaction is alpha-L-fucose = beta-L-fucose. Active toward L-galactopyranoside and D-arabinopyranoside but no D-fucopyranoside activity detected. Its function is as follows. Plays a role in the catabolism of L-fucose. Involved in the anomeric conversion of L-fucose. In Xanthomonas campestris pv. campestris (strain ATCC 33913 / DSM 3586 / NCPPB 528 / LMG 568 / P 25), this protein is L-fucose mutarotase.